The following is a 75-amino-acid chain: Protein myomixer (75 aa).

At 1–5 (MPAVF) the chain is on the cytoplasmic side. A helical membrane pass occupies residues 6-28 (LLLRSLVVRLFGSRLAASGVQLL). Residues 29–75 (RRILTTATGHLGTVLRNIWERISSQQSKEAILGCVLCLLNMHKKVDN) lie on the Extracellular side of the membrane. Positions 58 to 67 (AILGCVLCLL) match the AxLyCxL motif.

Belongs to the MYMX family. In terms of tissue distribution, specifically expressed in the developing myotome.

It is found in the cell membrane. Its function is as follows. Myoblast-specific protein that mediates myoblast fusion, an essential step for the formation of multi-nucleated muscle fibers. Involved in membrane fusion downstream of the lipid mixing step mediated by mymk. Acts by generating membrane stresses via its extracellular C-terminus, leading to drive fusion pore formation. This chain is Protein myomixer, found in Danio rerio (Zebrafish).